Reading from the N-terminus, the 216-residue chain is Protein shisa-5 (216 aa).

Residues 1–26 (MAAPAPAPRILVLLLLLLPAPEGAQS) form the signal peptide. Residues 27-93 (ELCMISHGRK…SGFDSDPVAR (67 aa)) lie on the Extracellular side of the membrane. Residues 94–114 (FGTVIAIGVTLFVIAVVTVIV) traverse the membrane as a helical segment. At 115–216 (CCTCSCCCLY…AYMEPPKAVP (102 aa)) the chain is on the cytoplasmic side.

Belongs to the shisa family. Interacts with PDCD6; PDCD6 can stabilize SHISA5.

The protein localises to the endoplasmic reticulum membrane. The protein resides in the nucleus membrane. Its function is as follows. Can induce apoptosis in a caspase-dependent manner and plays a role in p53/TP53-dependent apoptosis. The sequence is that of Protein shisa-5 (SHISA5) from Bos taurus (Bovine).